A 156-amino-acid polypeptide reads, in one-letter code: MLRQFIVSTVGRRLQLPMMAQSRLASNLDKTEYTTPGEIVDYDDPPHLPVPEYPVRPDEPLETRKQRLLYQSRKRGMLENDLLLSTFVAKHLKDFNAEQTAEYDQLINGVSNDWDIFYWATDTKPTPPQFDTEIMRLLKEHVKNHEKVQRIRQPDL.

A mitochondrion-targeting transit peptide spans 1 to 24; that stretch reads MLRQFIVSTVGRRLQLPMMAQSRL.

Belongs to the SDHAF2 family. Interacts with the flavoprotein subunit within the SDH catalytic dimer.

It is found in the mitochondrion matrix. In terms of biological role, plays an essential role in the assembly of succinate dehydrogenase (SDH), an enzyme complex (also referred to as respiratory complex II) that is a component of both the tricarboxylic acid (TCA) cycle and the mitochondrial electron transport chain, and which couples the oxidation of succinate to fumarate with the reduction of ubiquinone (coenzyme Q) to ubiquinol. Required for flavinylation (covalent attachment of FAD) of the flavoprotein subunit of the SDH catalytic dimer. The chain is Succinate dehydrogenase assembly factor 2-B, mitochondrial from Drosophila melanogaster (Fruit fly).